The chain runs to 120 residues: Holo-[acyl-carrier-protein] synthase (120 aa).

Mg(2+) contacts are provided by D8 and E58.

The protein belongs to the P-Pant transferase superfamily. AcpS family. Mg(2+) serves as cofactor.

It localises to the cytoplasm. The catalysed reaction is apo-[ACP] + CoA = holo-[ACP] + adenosine 3',5'-bisphosphate + H(+). Its function is as follows. Transfers the 4'-phosphopantetheine moiety from coenzyme A to a Ser of acyl-carrier-protein. The polypeptide is Holo-[acyl-carrier-protein] synthase (Anoxybacillus flavithermus (strain DSM 21510 / WK1)).